The following is a 183-amino-acid chain: uncharacterized protein (183 aa).

This is an uncharacterized protein from Archaeoglobus fulgidus (strain ATCC 49558 / DSM 4304 / JCM 9628 / NBRC 100126 / VC-16).